An 883-amino-acid polypeptide reads, in one-letter code: Protein argonaute 16 (883 aa).

A PAZ domain is found at 254 to 366 (PVFDFLLTNQ…VPIELCHMVS (113 aa)). The Piwi domain occupies 535 to 844 (FLLCVLPERK…AAAQMGQFMK (310 aa)).

This sequence belongs to the argonaute family. Ago subfamily.

Probably involved in the RNA silencing pathway. May bind to short RNAs such as microRNAs (miRNAs) or short interfering RNAs (siRNAs), and represses the translation of mRNAs which are complementary to them. The sequence is that of Protein argonaute 16 (AGO16) from Oryza sativa subsp. japonica (Rice).